The sequence spans 397 residues: Elongation factor Tu (397 aa).

The tr-type G domain occupies 10-207 (KPHVNVGTIG…TLDAYIPEPE (198 aa)). The segment at 19 to 26 (GHVDHGKT) is G1. 19 to 26 (GHVDHGKT) contacts GTP. Mg(2+) is bound at residue Thr-26. The G2 stretch occupies residues 60–64 (GITIA). The tract at residues 81–84 (DCPG) is G3. GTP is bound by residues 81-85 (DCPGH) and 136-139 (NKAD). The tract at residues 136-139 (NKAD) is G4. Residues 174–176 (SAL) are G5.

This sequence belongs to the TRAFAC class translation factor GTPase superfamily. Classic translation factor GTPase family. EF-Tu/EF-1A subfamily. In terms of assembly, monomer.

The protein resides in the cytoplasm. The enzyme catalyses GTP + H2O = GDP + phosphate + H(+). Functionally, GTP hydrolase that promotes the GTP-dependent binding of aminoacyl-tRNA to the A-site of ribosomes during protein biosynthesis. In Hahella chejuensis (strain KCTC 2396), this protein is Elongation factor Tu.